Reading from the N-terminus, the 181-residue chain is Crossover junction endodeoxyribonuclease RuvC (181 aa).

Active-site residues include aspartate 7, glutamate 67, and aspartate 139. The Mg(2+) site is built by aspartate 7, glutamate 67, and aspartate 139.

It belongs to the RuvC family. As to quaternary structure, homodimer which binds Holliday junction (HJ) DNA. The HJ becomes 2-fold symmetrical on binding to RuvC with unstacked arms; it has a different conformation from HJ DNA in complex with RuvA. In the full resolvosome a probable DNA-RuvA(4)-RuvB(12)-RuvC(2) complex forms which resolves the HJ. Mg(2+) serves as cofactor.

The protein localises to the cytoplasm. The catalysed reaction is Endonucleolytic cleavage at a junction such as a reciprocal single-stranded crossover between two homologous DNA duplexes (Holliday junction).. Functionally, the RuvA-RuvB-RuvC complex processes Holliday junction (HJ) DNA during genetic recombination and DNA repair. Endonuclease that resolves HJ intermediates. Cleaves cruciform DNA by making single-stranded nicks across the HJ at symmetrical positions within the homologous arms, yielding a 5'-phosphate and a 3'-hydroxyl group; requires a central core of homology in the junction. The consensus cleavage sequence is 5'-(A/T)TT(C/G)-3'. Cleavage occurs on the 3'-side of the TT dinucleotide at the point of strand exchange. HJ branch migration catalyzed by RuvA-RuvB allows RuvC to scan DNA until it finds its consensus sequence, where it cleaves and resolves the cruciform DNA. The protein is Crossover junction endodeoxyribonuclease RuvC of Cupriavidus taiwanensis (strain DSM 17343 / BCRC 17206 / CCUG 44338 / CIP 107171 / LMG 19424 / R1) (Ralstonia taiwanensis (strain LMG 19424)).